A 383-amino-acid polypeptide reads, in one-letter code: 8-amino-7-oxononanoate synthase (383 aa).

Residue R23 coordinates substrate. 110–111 (GF) lines the pyridoxal 5'-phosphate pocket. H135 provides a ligand contact to substrate. Pyridoxal 5'-phosphate is bound by residues S181, H209, and T235. N6-(pyridoxal phosphate)lysine is present on K238. Substrate is bound at residue T351.

Belongs to the class-II pyridoxal-phosphate-dependent aminotransferase family. BioF subfamily. In terms of assembly, homodimer. Pyridoxal 5'-phosphate serves as cofactor.

It catalyses the reaction 6-carboxyhexanoyl-[ACP] + L-alanine + H(+) = (8S)-8-amino-7-oxononanoate + holo-[ACP] + CO2. It participates in cofactor biosynthesis; biotin biosynthesis. Functionally, catalyzes the decarboxylative condensation of pimeloyl-[acyl-carrier protein] and L-alanine to produce 8-amino-7-oxononanoate (AON), [acyl-carrier protein], and carbon dioxide. The polypeptide is 8-amino-7-oxononanoate synthase (Aliivibrio fischeri (strain MJ11) (Vibrio fischeri)).